A 391-amino-acid chain; its full sequence is S-adenosylmethionine synthase (391 aa).

The interval 1–20 (MPRSDYLFTSESVSEGHPDK) is disordered. ATP is bound at residue histidine 17. Aspartate 19 serves as a coordination point for Mg(2+). Glutamate 45 contacts K(+). 2 residues coordinate L-methionine: glutamate 58 and glutamine 102. The interval 102–112 (QSADIAQGVDA) is flexible loop. ATP-binding positions include 169-171 (DAK), 235-236 (KF), aspartate 244, 250-251 (RK), alanine 267, and lysine 271. An L-methionine-binding site is contributed by aspartate 244. Lysine 275 contributes to the L-methionine binding site.

This sequence belongs to the AdoMet synthase family. Homotetramer; dimer of dimers. Mg(2+) is required as a cofactor. K(+) serves as cofactor.

Its subcellular location is the cytoplasm. It catalyses the reaction L-methionine + ATP + H2O = S-adenosyl-L-methionine + phosphate + diphosphate. It functions in the pathway amino-acid biosynthesis; S-adenosyl-L-methionine biosynthesis; S-adenosyl-L-methionine from L-methionine: step 1/1. Catalyzes the formation of S-adenosylmethionine (AdoMet) from methionine and ATP. The overall synthetic reaction is composed of two sequential steps, AdoMet formation and the subsequent tripolyphosphate hydrolysis which occurs prior to release of AdoMet from the enzyme. The polypeptide is S-adenosylmethionine synthase (Methylorubrum populi (strain ATCC BAA-705 / NCIMB 13946 / BJ001) (Methylobacterium populi)).